Here is a 183-residue protein sequence, read N- to C-terminus: MKEKIPFYNEKEFHDMVKKTKKGTFSGWYIIDKDNKSVEFSGSFNRQFKLNKPVIPVNTEYVTRKEFNEYKVSNDQRLTKIETTLAAQGEQINKLTQTVEKQGEQINQLVQVVLLHGEQINKLTQTVEKQGEQIKELQVEQKAQGEQIKAQGKQIKAQGKTLKSILQALGGINKRLDKIDPPK.

It belongs to the UPF0134 family.

The chain is UPF0134 protein MPN_100 from Mycoplasma pneumoniae (strain ATCC 29342 / M129 / Subtype 1) (Mycoplasmoides pneumoniae).